The primary structure comprises 166 residues: 3-dehydroquinate dehydratase (166 aa).

The Proton acceptor role is filled by Tyr22. Substrate-binding residues include Asn73, His79, and Asp86. His99 (proton donor) is an active-site residue. Substrate contacts are provided by residues 100 to 101 (IT) and Arg110.

The protein belongs to the type-II 3-dehydroquinase family. As to quaternary structure, homododecamer.

The catalysed reaction is 3-dehydroquinate = 3-dehydroshikimate + H2O. It functions in the pathway metabolic intermediate biosynthesis; chorismate biosynthesis; chorismate from D-erythrose 4-phosphate and phosphoenolpyruvate: step 3/7. Functionally, catalyzes a trans-dehydration via an enolate intermediate. This Wolinella succinogenes (strain ATCC 29543 / DSM 1740 / CCUG 13145 / JCM 31913 / LMG 7466 / NCTC 11488 / FDC 602W) (Vibrio succinogenes) protein is 3-dehydroquinate dehydratase.